Reading from the N-terminus, the 112-residue chain is uncharacterized protein (112 aa).

Residues S51 and S53 each carry the phosphoserine modification. A helical transmembrane segment spans residues 90-110 (FIFTLSMFLIAFILLIAFVSF).

It localises to the golgi apparatus membrane. Its subcellular location is the endoplasmic reticulum membrane. This is an uncharacterized protein from Schizosaccharomyces pombe (strain 972 / ATCC 24843) (Fission yeast).